Reading from the N-terminus, the 212-residue chain is Large ribosomal subunit protein bL25 (212 aa).

The interval 179–212 is disordered; that stretch reads EPEEEELPEDDEAAAEGEDAAAGEEAEAPAESED.

It belongs to the bacterial ribosomal protein bL25 family. CTC subfamily. In terms of assembly, part of the 50S ribosomal subunit; part of the 5S rRNA/L5/L18/L25 subcomplex. Contacts the 5S rRNA. Binds to the 5S rRNA independently of L5 and L18.

Functionally, this is one of the proteins that binds to the 5S RNA in the ribosome where it forms part of the central protuberance. This is Large ribosomal subunit protein bL25 from Corynebacterium urealyticum (strain ATCC 43042 / DSM 7109).